The primary structure comprises 361 residues: Phospho-N-acetylmuramoyl-pentapeptide-transferase (361 aa).

10 helical membrane-spanning segments follow: residues 28–48, 70–90, 94–114, 129–149, 169–189, 205–225, 237–257, 264–284, 289–309, and 338–358; these read LSMFTSMFVVLLIGTPFIKFF, IGTPTMGGVLILLGLFSGILL, LSNYHIWFLLFIVSGFGLLGA, VSFKFKIISQILIAIVGIYGL, LIINLGWFFIPFSIFIIVGSS, PVILVAACFAFISYVTGNIVF, MGEVSVFCGSIIGACLGFLWF, IFMGDTGSLALGGSLGAIGII, IVLAITGGLFVLEAVSVIIQV, and TVVIRFWIISIILAMIGLATL.

It belongs to the glycosyltransferase 4 family. MraY subfamily. The cofactor is Mg(2+).

It is found in the cell inner membrane. The enzyme catalyses UDP-N-acetyl-alpha-D-muramoyl-L-alanyl-gamma-D-glutamyl-meso-2,6-diaminopimeloyl-D-alanyl-D-alanine + di-trans,octa-cis-undecaprenyl phosphate = di-trans,octa-cis-undecaprenyl diphospho-N-acetyl-alpha-D-muramoyl-L-alanyl-D-glutamyl-meso-2,6-diaminopimeloyl-D-alanyl-D-alanine + UMP. The protein operates within cell wall biogenesis; peptidoglycan biosynthesis. Its function is as follows. Catalyzes the initial step of the lipid cycle reactions in the biosynthesis of the cell wall peptidoglycan: transfers peptidoglycan precursor phospho-MurNAc-pentapeptide from UDP-MurNAc-pentapeptide onto the lipid carrier undecaprenyl phosphate, yielding undecaprenyl-pyrophosphoryl-MurNAc-pentapeptide, known as lipid I. In Pelagibacter ubique (strain HTCC1062), this protein is Phospho-N-acetylmuramoyl-pentapeptide-transferase.